A 484-amino-acid chain; its full sequence is Trigger factor (484 aa).

In terms of domain architecture, PPIase FKBP-type spans 162–243 (GDFISIDLSA…VKSVKERELP (82 aa)). The disordered stretch occupies residues 427-484 (DGNTIDTSEFFGKPPENDVTDLLDDDADGDAGVDADGDTENSAEPADADSADAAQGAG). Over residues 444–476 (DVTDLLDDDADGDAGVDADGDTENSAEPADADS) the composition is skewed to acidic residues.

The protein belongs to the FKBP-type PPIase family. Tig subfamily.

It is found in the cytoplasm. It catalyses the reaction [protein]-peptidylproline (omega=180) = [protein]-peptidylproline (omega=0). In terms of biological role, involved in protein export. Acts as a chaperone by maintaining the newly synthesized protein in an open conformation. Functions as a peptidyl-prolyl cis-trans isomerase. This is Trigger factor from Mycobacterium marinum (strain ATCC BAA-535 / M).